The chain runs to 790 residues: Probable copper-transporting ATPase SynA (790 aa).

Residues 1–105 (MPAAIVHSAD…IPPLQQQRLQ (105 aa)) lie on the Cytoplasmic side of the membrane. The HMA domain occupies 14 to 81 (TSILVEVEGM…EITGLGFRAQ (68 aa)). Residues Cys25 and Cys28 each coordinate Cu cation. A helical membrane pass occupies residues 106–125 (LAIAAFLLIVSSWGHLGHWL). Topologically, residues 126–134 (DHPLPGTDQ) are extracellular. The helical transmembrane segment at 135–154 (LWFHALLAIWALLGPGRSIL) threads the bilayer. The Cytoplasmic segment spans residues 155 to 166 (QAGWQGLRCGAP). The helical transmembrane segment at 167–189 (NMNSLVLLGTGSAYLASLVALLW) threads the bilayer. The Extracellular portion of the chain corresponds to 190–193 (PQLG). Residues 194 to 211 (WVCFLDEPVMLLGFILLG) traverse the membrane as a helical segment. The Cytoplasmic segment spans residues 212–357 (RTLEEQARFR…RKAPVQRFAD (146 aa)). A helical transmembrane segment spans residues 358–380 (AIAGRFVYGVCAIAALTFGFWAT). At 381–416 (LGSRWWPQVLQQPLPGLLIHAPHHGMEMAHPHSHSP) the chain is on the extracellular side. A helical membrane pass occupies residues 417 to 439 (LLLALTLAISVLVVACPCALGLA). Residues 440 to 726 (TPTAILVATG…QMGLRTIRQN (287 aa)) are Cytoplasmic-facing. Asp476 serves as the catalytic 4-aspartylphosphate intermediate. Residues Asp669 and Asp673 each contribute to the Mg(2+) site. Residues 727–749 (LTWALGYNVVMLPLAAGAFLPAY) form a helical membrane-spanning segment. Topologically, residues 750-753 (GLAL) are extracellular. A helical membrane pass occupies residues 754–776 (TPAIAGACMAVSSLAVVSNSLLL). At 777–790 (RYWFRRSLNHSVSV) the chain is on the cytoplasmic side.

The protein belongs to the cation transport ATPase (P-type) (TC 3.A.3) family. Type IB subfamily.

It is found in the cell membrane. It catalyses the reaction Cu(2+)(in) + ATP + H2O = Cu(2+)(out) + ADP + phosphate + H(+). Functionally, involved in copper transport. The sequence is that of Probable copper-transporting ATPase SynA (synA) from Synechococcus sp. (strain ATCC 27144 / PCC 6301 / SAUG 1402/1) (Anacystis nidulans).